We begin with the raw amino-acid sequence, 166 residues long: NAD(P)H-quinone oxidoreductase subunit I, chloroplastic (166 aa).

4Fe-4S ferredoxin-type domains are found at residues 55-84 (GRIH…VDWK) and 95-124 (LNYS…MTEE). [4Fe-4S] cluster is bound by residues C64, C67, C70, C74, C104, C107, C110, and C114.

Belongs to the complex I 23 kDa subunit family. NDH is composed of at least 16 different subunits, 5 of which are encoded in the nucleus. It depends on [4Fe-4S] cluster as a cofactor.

The protein localises to the plastid. The protein resides in the chloroplast thylakoid membrane. The catalysed reaction is a plastoquinone + NADH + (n+1) H(+)(in) = a plastoquinol + NAD(+) + n H(+)(out). It carries out the reaction a plastoquinone + NADPH + (n+1) H(+)(in) = a plastoquinol + NADP(+) + n H(+)(out). In terms of biological role, NDH shuttles electrons from NAD(P)H:plastoquinone, via FMN and iron-sulfur (Fe-S) centers, to quinones in the photosynthetic chain and possibly in a chloroplast respiratory chain. The immediate electron acceptor for the enzyme in this species is believed to be plastoquinone. Couples the redox reaction to proton translocation, and thus conserves the redox energy in a proton gradient. This chain is NAD(P)H-quinone oxidoreductase subunit I, chloroplastic, found in Bahiopsis tomentosa (Tecote).